A 291-amino-acid polypeptide reads, in one-letter code: Sesquiterpene cyclase astC (291 aa).

It belongs to the HAD-like hydrolase superfamily.

It carries out the reaction (2E,6E)-farnesyl diphosphate = (S,S)-drim-8-en-11-yl diphosphate. It functions in the pathway secondary metabolite biosynthesis; terpenoid biosynthesis. In terms of biological role, sesquiterpene cyclase; part of the gene cluster that mediates the biosynthesis of astellolides, drimane-type sesquiterpene esters that show antimicrobial, anti-inflammatory, and anti-tumor activities. The first step in astellolide biosynthesis is performed by the sesquiterpene cyclase astC that catalyzes the formation of drimanyl pyrophosphate from farnesyl pyrophosphate. Drimanyl pyrophosphate is then dephosphorylated by the sesquiterpene phosphatase astI to produce drimanyl monophosphate which is further dephosphorylated to drim-8-ene-11-ol by atsK. Drim-8-ene-11-ol is converted to confertifolin, probably by the cytochrome P450 monooxygenase astD and/or the dehydrogenase astE. The cytochrome P450 monooxygenases astB, astF and astJ then hydroxylate confertifolin at C6, C14, or C15 to form trihydroxy confertifolin. The nonribosomal peptide synthetase astA catalyzes ester bond formation between trihydroxy contifolin and benzoic acid (BA) or 4-hydroxy benzoic acid (4HBA), leading to the formation of dideacetyl astellolides A and B, respectively. Finally, the O-acetyltransferase astG converts dideacetyl astellolides A and B into deacetyl astellolides A and B. The chain is Sesquiterpene cyclase astC from Aspergillus oryzae (strain ATCC 42149 / RIB 40) (Yellow koji mold).